The primary structure comprises 307 residues: uncharacterized protein (307 aa).

Positions 1–25 (MKFQKRNIQLVLILLLILNNCFINS) are cleaved as a signal peptide. The disordered stretch occupies residues 60–90 (ENNNKNNNNNNNNNNNNNNNNKNSKVKNDDS). Residues 63-82 (NKNNNNNNNNNNNNNNNNKN) show a composition bias toward low complexity. Residues N124 and N173 are each glycosylated (N-linked (GlcNAc...) asparagine). 2 consecutive transmembrane segments (helical) span residues 244-264 (IIFA…YYLA) and 275-295 (IIGV…TIVI).

The protein localises to the membrane. This is an uncharacterized protein from Dictyostelium discoideum (Social amoeba).